Here is a 485-residue protein sequence, read N- to C-terminus: Membrane-bound lytic murein transglycosylase F (485 aa).

The signal sequence occupies residues Met-1 to Glu-29. The segment at Lys-30 to Val-267 is non-LT domain. The interval Asp-268–Met-485 is LT domain. Residue Glu-314 is part of the active site. Residues Glu-465 to Met-485 form a disordered region. Residues Asn-474–Met-485 show a composition bias toward basic and acidic residues.

It in the N-terminal section; belongs to the bacterial solute-binding protein 3 family. In the C-terminal section; belongs to the transglycosylase Slt family.

The protein resides in the cell outer membrane. It carries out the reaction Exolytic cleavage of the (1-&gt;4)-beta-glycosidic linkage between N-acetylmuramic acid (MurNAc) and N-acetylglucosamine (GlcNAc) residues in peptidoglycan, from either the reducing or the non-reducing ends of the peptidoglycan chains, with concomitant formation of a 1,6-anhydrobond in the MurNAc residue.. Functionally, murein-degrading enzyme that degrades murein glycan strands and insoluble, high-molecular weight murein sacculi, with the concomitant formation of a 1,6-anhydromuramoyl product. Lytic transglycosylases (LTs) play an integral role in the metabolism of the peptidoglycan (PG) sacculus. Their lytic action creates space within the PG sacculus to allow for its expansion as well as for the insertion of various structures such as secretion systems and flagella. The protein is Membrane-bound lytic murein transglycosylase F of Pseudomonas putida (strain ATCC 47054 / DSM 6125 / CFBP 8728 / NCIMB 11950 / KT2440).